Consider the following 397-residue polypeptide: Phosphoglycerate kinase (397 aa).

Substrate-binding positions include 22–24 (DLN), Arg37, 60–63 (HFGR), Arg119, and Arg152. ATP is bound by residues Lys202, Glu324, and 354 to 357 (GGDT).

Belongs to the phosphoglycerate kinase family. As to quaternary structure, monomer.

The protein resides in the cytoplasm. It carries out the reaction (2R)-3-phosphoglycerate + ATP = (2R)-3-phospho-glyceroyl phosphate + ADP. The protein operates within carbohydrate degradation; glycolysis; pyruvate from D-glyceraldehyde 3-phosphate: step 2/5. The protein is Phosphoglycerate kinase of Rhizorhabdus wittichii (strain DSM 6014 / CCUG 31198 / JCM 15750 / NBRC 105917 / EY 4224 / RW1) (Sphingomonas wittichii).